The sequence spans 109 residues: UPF0060 membrane protein PA14_21660 (109 aa).

Transmembrane regions (helical) follow at residues 5-25 (LWFV…YLWL), 27-47 (LGKS…FALL), 59-79 (AYAA…AFVE), and 84-104 (LWSD…VLFG).

The protein belongs to the UPF0060 family.

It is found in the cell inner membrane. The chain is UPF0060 membrane protein PA14_21660 from Pseudomonas aeruginosa (strain UCBPP-PA14).